Consider the following 172-residue polypeptide: uncharacterized protein (172 aa).

This sequence belongs to the flavoredoxin family. FMN is required as a cofactor.

This is an uncharacterized protein from Pyrococcus horikoshii (strain ATCC 700860 / DSM 12428 / JCM 9974 / NBRC 100139 / OT-3).